The primary structure comprises 171 residues: 3-hydroxydecanoyl-[acyl-carrier-protein] dehydratase (171 aa).

His-70 is an active-site residue.

This sequence belongs to the thioester dehydratase family. FabA subfamily. As to quaternary structure, homodimer.

Its subcellular location is the cytoplasm. The catalysed reaction is a (3R)-hydroxyacyl-[ACP] = a (2E)-enoyl-[ACP] + H2O. It carries out the reaction (3R)-hydroxydecanoyl-[ACP] = (2E)-decenoyl-[ACP] + H2O. It catalyses the reaction (2E)-decenoyl-[ACP] = (3Z)-decenoyl-[ACP]. The protein operates within lipid metabolism; fatty acid biosynthesis. Its function is as follows. Necessary for the introduction of cis unsaturation into fatty acids. Catalyzes the dehydration of (3R)-3-hydroxydecanoyl-ACP to E-(2)-decenoyl-ACP and then its isomerization to Z-(3)-decenoyl-ACP. Can catalyze the dehydratase reaction for beta-hydroxyacyl-ACPs with saturated chain lengths up to 16:0, being most active on intermediate chain length. This is 3-hydroxydecanoyl-[acyl-carrier-protein] dehydratase from Pseudomonas fluorescens (strain ATCC BAA-477 / NRRL B-23932 / Pf-5).